A 161-amino-acid polypeptide reads, in one-letter code: Anaerobic nitrite reductase Glb1-2 (161 aa).

Positions A9–K158 constitute a Globin domain. Positions E42–P46 match the Homodimerization motif. S52, K66, H70, K100, T104, and H105 together coordinate heme b. The Homodimerization signature appears at P112 to D124.

Belongs to the plant globin family. Homodimer. Heme b serves as cofactor. In terms of tissue distribution, mainly expressed in root nodules and leaves, and, to a lower extent, in roots, stems, flowers and fruits. Accumulates in mature root nodules.

The catalysed reaction is Fe(III)-heme b-[protein] + nitric oxide + H2O = Fe(II)-heme b-[protein] + nitrite + 2 H(+). Its function is as follows. Phytoglobin that reduces nitrite to nitric oxide (NO) under anoxic conditions (e.g. during flooding or in waterlogged soil) and upon root nodulation. Required for general plant development and during nodulation, especially for the onset of symbiosis. Monitors nitric oxide (NO) levels during early phase of the nitrogen-fixing symbiosis and buffers oxygen in functioning nodules. Necessary for the production of pods. May not function as an oxygen storage or transport protein. Has an unusually high affinity for O(2) through a hexacoordinate heme iron because of a very low dissociation constant. The protein is Anaerobic nitrite reductase Glb1-2 of Lotus japonicus (Lotus corniculatus var. japonicus).